Consider the following 211-residue polypeptide: Thiamine-phosphate synthase (211 aa).

4-amino-2-methyl-5-(diphosphooxymethyl)pyrimidine is bound by residues 37–41 (QLRIK) and Asn-69. The Mg(2+) site is built by Asp-70 and Asp-89. Ser-108 is a binding site for 4-amino-2-methyl-5-(diphosphooxymethyl)pyrimidine. 134–136 (TQT) lines the 2-[(2R,5Z)-2-carboxy-4-methylthiazol-5(2H)-ylidene]ethyl phosphate pocket. Residue Lys-137 coordinates 4-amino-2-methyl-5-(diphosphooxymethyl)pyrimidine. 2-[(2R,5Z)-2-carboxy-4-methylthiazol-5(2H)-ylidene]ethyl phosphate-binding positions include Gly-166 and 186 to 187 (IS).

This sequence belongs to the thiamine-phosphate synthase family. It depends on Mg(2+) as a cofactor.

The enzyme catalyses 2-[(2R,5Z)-2-carboxy-4-methylthiazol-5(2H)-ylidene]ethyl phosphate + 4-amino-2-methyl-5-(diphosphooxymethyl)pyrimidine + 2 H(+) = thiamine phosphate + CO2 + diphosphate. It carries out the reaction 2-(2-carboxy-4-methylthiazol-5-yl)ethyl phosphate + 4-amino-2-methyl-5-(diphosphooxymethyl)pyrimidine + 2 H(+) = thiamine phosphate + CO2 + diphosphate. The catalysed reaction is 4-methyl-5-(2-phosphooxyethyl)-thiazole + 4-amino-2-methyl-5-(diphosphooxymethyl)pyrimidine + H(+) = thiamine phosphate + diphosphate. It functions in the pathway cofactor biosynthesis; thiamine diphosphate biosynthesis; thiamine phosphate from 4-amino-2-methyl-5-diphosphomethylpyrimidine and 4-methyl-5-(2-phosphoethyl)-thiazole: step 1/1. Condenses 4-methyl-5-(beta-hydroxyethyl)thiazole monophosphate (THZ-P) and 2-methyl-4-amino-5-hydroxymethyl pyrimidine pyrophosphate (HMP-PP) to form thiamine monophosphate (TMP). The chain is Thiamine-phosphate synthase from Shigella boydii serotype 4 (strain Sb227).